Reading from the N-terminus, the 207-residue chain is uncharacterized protein (207 aa).

A signal peptide spans 1-19; the sequence is MRFNVSFLLSLLLPTLAFA.

This sequence to P.multocida PM1509.

This is an uncharacterized protein from Pasteurella multocida (strain Pm70).